The primary structure comprises 225 residues: Germin-like protein 8-6 (225 aa).

The first 23 residues, 1 to 23 (MASPSSLCLLTALLALVSWQTIA), serve as a signal peptide directing secretion. A disulfide bond links cysteine 33 and cysteine 48. One can recognise a Cupin type-1 domain in the interval 63 to 213 (AMLDTPRKTN…AFQVEKGTID (151 aa)). An N-linked (GlcNAc...) asparagine glycan is attached at asparagine 77. Residues histidine 110, histidine 112, and glutamate 117 each contribute to the Mn(2+) site. Asparagine 136 carries an N-linked (GlcNAc...) asparagine glycan. Histidine 158 is a Mn(2+) binding site.

This sequence belongs to the germin family. In terms of assembly, oligomer (believed to be a pentamer but probably hexamer).

The protein resides in the secreted. It is found in the extracellular space. The protein localises to the apoplast. In terms of biological role, plays a role in broad-spectrum disease resistance. Probably has no oxalate oxidase activity even if the active site is conserved. The protein is Germin-like protein 8-6 of Oryza sativa subsp. japonica (Rice).